The following is a 218-amino-acid chain: 23 kDa integral membrane protein (218 aa).

Residues methionine 1–lysine 12 are Cytoplasmic-facing. A helical membrane pass occupies residues serine 13–valine 36. Over glutamate 37–proline 55 the chain is Extracellular. Residues isoleucine 56 to leucine 71 traverse the membrane as a helical segment. The Cytoplasmic portion of the chain corresponds to glycine 72–cysteine 82. The helical transmembrane segment at methionine 83–tyrosine 108 threads the bilayer. Topologically, residues lysine 109–asparagine 183 are extracellular. A helical transmembrane segment spans residues leucine 184–alanine 205. Topologically, residues cysteine 206–valine 218 are cytoplasmic.

It belongs to the tetraspanin (TM4SF) family.

Its subcellular location is the membrane. This is 23 kDa integral membrane protein from Schistosoma japonicum (Blood fluke).